The primary structure comprises 248 residues: ATP synthase subunit a (248 aa).

The next 6 helical transmembrane spans lie at 34–54 (TNAT…LVFG), 91–111 (YFPY…LGLL), 121–141 (IAVT…LGFV), 147–167 (FLGL…LAVI), 196–216 (VFAA…AITA), and 220–240 (LEVL…CVYL).

Belongs to the ATPase A chain family. In terms of assembly, F-type ATPases have 2 components, CF(1) - the catalytic core - and CF(0) - the membrane proton channel. CF(1) has five subunits: alpha(3), beta(3), gamma(1), delta(1), epsilon(1). CF(0) has three main subunits: a(1), b(2) and c(9-12). The alpha and beta chains form an alternating ring which encloses part of the gamma chain. CF(1) is attached to CF(0) by a central stalk formed by the gamma and epsilon chains, while a peripheral stalk is formed by the delta and b chains.

Its subcellular location is the cell inner membrane. In terms of biological role, key component of the proton channel; it plays a direct role in the translocation of protons across the membrane. The chain is ATP synthase subunit a from Paracoccus denitrificans (strain Pd 1222).